We begin with the raw amino-acid sequence, 1478 residues long: Fanconi anemia group D2 protein homolog (1478 aa).

Positions 33–53 are disordered; that stretch reads NISVESSSGGSEENIPASQEH. Over residues 35-45 the composition is skewed to low complexity; the sequence is SVESSSGGSEE. A Glycyl lysine isopeptide (Lys-Gly) (interchain with G-Cter in ubiquitin) cross-link involves residue Lys595. Disordered regions lie at residues 896–918 and 1420–1478; these read NQNQKRPGPKPAAKLNATLPEPD and TPRS…SKCF. Over residues 1429-1442 the composition is skewed to acidic residues; it reads ENSDDELPADDTSV. A compositionally biased stretch (basic residues) spans 1468–1478; the sequence is RSKSSSRSKCF.

It belongs to the Fanconi anemia protein FANCD2 family. Homodimer; cannot be ubiquitinated and does not bind DNA. Part of a Fanci-Fancd2 heterodimeric complex that binds and scans dsDNA for DNA damage. Interacts with Fancl (via C-terminus). In terms of processing, monoubiquitinated by Fancl in response to ionising radiation.

It localises to the nucleus. In terms of biological role, required for maintenance of chromosomal stability. Together with Fancl, and probably Fanci, involved in DNA repair of damage caused by agents that induce interstrand cross-links but not agents that cause double strand breaks. Required for S phase checkpoint activation in response to ionizing radiation induced DNA damage. This Drosophila melanogaster (Fruit fly) protein is Fanconi anemia group D2 protein homolog.